A 465-amino-acid chain; its full sequence is MRFAPSPTGMFHVGGARSALQNWIFAKQQGGVFVLRVEDTDAARNKPEWTEGILAALEWIGIARGSYEGPYFQSSYATEHRAAASRLHEGGRAYYCDCTREVVQARTGSPHTGYDGFCRDRNLGPGAGRALRFRTPDEGATVVVDLIRGEPTFDNRLIEDFVIARSDGSPVFLLANVVDDMTMGITHVIRAEEHLPNTPKQQLLWDALGVKPPVWAHVPVVVNEKRQKLSKRRDKVALEAYRDEGYLADAMCNYLMLLGWAPSGDREIVPWPVIEEEFRLEEVNPSSAFFDEKKLRAFNGEYIRALPIAEFIAGCQPWLTGTATIAPPPWQPDEFDAEAFAAVAPLAQTRIAVLSEIVPNVDFLFLDSPLIDEGAWAKAMKEGAGDLLDAVIAAFTALPSWDADSTKSTLEAVGAEHGLKLGKAQAPVRVAVTGRRVGLPLFESLEVLGRERTLTRLRAARLRLP.

The short motif at P5–G15 is the 'HIGH' region element. Zn(2+)-binding residues include C96, C98, C118, and D120. The 'KMSKS' region motif lies at K228–R232. K231 contributes to the ATP binding site.

Belongs to the class-I aminoacyl-tRNA synthetase family. Glutamate--tRNA ligase type 1 subfamily. As to quaternary structure, monomer. Zn(2+) is required as a cofactor.

It is found in the cytoplasm. The enzyme catalyses tRNA(Glu) + L-glutamate + ATP = L-glutamyl-tRNA(Glu) + AMP + diphosphate. Functionally, catalyzes the attachment of glutamate to tRNA(Glu) in a two-step reaction: glutamate is first activated by ATP to form Glu-AMP and then transferred to the acceptor end of tRNA(Glu). The sequence is that of Glutamate--tRNA ligase from Salinispora tropica (strain ATCC BAA-916 / DSM 44818 / JCM 13857 / NBRC 105044 / CNB-440).